Reading from the N-terminus, the 433-residue chain is Probable imidazolonepropionase (433 aa).

4-imidazolone-5-propanoate contacts are provided by tyrosine 160 and histidine 193. Position 160 (tyrosine 160) interacts with N-formimidoyl-L-glutamate. Fe(3+) is bound at residue histidine 261. A Zn(2+)-binding site is contributed by histidine 261. Glutamate 264 serves as a coordination point for 4-imidazolone-5-propanoate. A Fe(3+)-binding site is contributed by aspartate 335. Aspartate 335 provides a ligand contact to Zn(2+). An N-formimidoyl-L-glutamate-binding site is contributed by asparagine 337.

This sequence belongs to the metallo-dependent hydrolases superfamily. HutI family. The cofactor is Zn(2+). Fe(3+) serves as cofactor.

It catalyses the reaction 4-imidazolone-5-propanoate + H2O = N-formimidoyl-L-glutamate. Its pathway is amino-acid degradation; L-histidine degradation into L-glutamate; N-formimidoyl-L-glutamate from L-histidine: step 3/3. The protein is Probable imidazolonepropionase (amdhd1) of Danio rerio (Zebrafish).